The chain runs to 206 residues: Thymidylate kinase (206 aa).

Residue 11–18 coordinates ATP; it reads GIDGAGKT.

It belongs to the thymidylate kinase family.

The enzyme catalyses dTMP + ATP = dTDP + ADP. Phosphorylation of dTMP to form dTDP in both de novo and salvage pathways of dTTP synthesis. The sequence is that of Thymidylate kinase from Burkholderia lata (strain ATCC 17760 / DSM 23089 / LMG 22485 / NCIMB 9086 / R18194 / 383).